We begin with the raw amino-acid sequence, 66 residues long: Photosystem II reaction center protein J (66 aa).

Residues 1–27 (MSGKKSGLPDGRVPDRNPDGTPAVPWK) form a disordered region. A helical membrane pass occupies residues 37-57 (LWLVATAGGMAVMFVVGLFFY).

It belongs to the PsbJ family. PSII is composed of 1 copy each of membrane proteins PsbA, PsbB, PsbC, PsbD, PsbE, PsbF, PsbH, PsbI, PsbJ, PsbK, PsbL, PsbM, PsbT, PsbX, PsbY, PsbZ, Psb30/Ycf12, peripheral proteins PsbO, CyanoQ (PsbQ), PsbU, PsbV and a large number of cofactors. It forms dimeric complexes.

The protein localises to the cellular thylakoid membrane. One of the components of the core complex of photosystem II (PSII). PSII is a light-driven water:plastoquinone oxidoreductase that uses light energy to abstract electrons from H(2)O, generating O(2) and a proton gradient subsequently used for ATP formation. It consists of a core antenna complex that captures photons, and an electron transfer chain that converts photonic excitation into a charge separation. This chain is Photosystem II reaction center protein J, found in Synechococcus sp. (strain RCC307).